The following is a 79-amino-acid chain: Large ribosomal subunit protein bL31 (79 aa).

The protein belongs to the bacterial ribosomal protein bL31 family. Type A subfamily. In terms of assembly, part of the 50S ribosomal subunit.

Functionally, binds the 23S rRNA. This chain is Large ribosomal subunit protein bL31 (rpmE), found in Rickettsia bellii (strain RML369-C).